The primary structure comprises 191 residues: MNECPPGTRPFRVRHAAAELRQGGVVAYPTEAVWGLGCDPRNADAVARLLALKGRPERQGLILIAAESRQLARYLAPLPAEWAETIQASWPGPMTWVLPASTRAPRWVSGGRDTLAVRVTAHPVAAALCSAFGGALVSTSANPSARRPARSVAEVRRYFGTRIDALVPGRLGGLERPTPIRDGRSGAYLRR.

Residues 10–191 enclose the YrdC-like domain; it reads PFRVRHAAAE…DGRSGAYLRR (182 aa).

It belongs to the SUA5 family. TsaC subfamily.

The protein resides in the cytoplasm. The catalysed reaction is L-threonine + hydrogencarbonate + ATP = L-threonylcarbamoyladenylate + diphosphate + H2O. Functionally, required for the formation of a threonylcarbamoyl group on adenosine at position 37 (t(6)A37) in tRNAs that read codons beginning with adenine. Catalyzes the conversion of L-threonine, HCO(3)(-)/CO(2) and ATP to give threonylcarbamoyl-AMP (TC-AMP) as the acyladenylate intermediate, with the release of diphosphate. This is Threonylcarbamoyl-AMP synthase from Halorhodospira halophila (strain DSM 244 / SL1) (Ectothiorhodospira halophila (strain DSM 244 / SL1)).